A 495-amino-acid polypeptide reads, in one-letter code: Leucine aminopeptidase 2 (495 aa).

A signal peptide spans 1–21 (MKTQLLSLGVALTAISQGVIA). The 95-residue stretch at 124-218 (PPADKITAEL…ADGKNLASLV (95 aa)) folds into the PA domain. 2 N-linked (GlcNAc...) asparagine glycosylation sites follow: Asn142 and Asn235. 2 residues coordinate Zn(2+): His259 and Asp271. N-linked (GlcNAc...) asparagine glycosylation is present at Asn272. The Proton acceptor role is filled by Glu303. Positions 304 and 332 each coordinate Zn(2+). A glycan (N-linked (GlcNAc...) asparagine) is linked at Asn352. His430 serves as a coordination point for Zn(2+). Residues 464–495 (GFPTRPKTGKRDVSPRGQSMPGGGCGHHSVFM) form a disordered region.

This sequence belongs to the peptidase M28 family. M28A subfamily. Monomer. It depends on Zn(2+) as a cofactor.

It is found in the secreted. Its function is as follows. Extracellular aminopeptidase that releases a wide variety of amino acids from natural peptides and contributes to pathogenicity. The protein is Leucine aminopeptidase 2 (LAP2) of Arthroderma otae (strain ATCC MYA-4605 / CBS 113480) (Microsporum canis).